A 377-amino-acid chain; its full sequence is MVSVNLPWELVEEILYRVPPQSLARFRTVCKQWNSLFDDNKFVNDHLVRSRPQFMFRTDSKMYSVAVNFSGPWIEVHELTLDIPGLNCEMPIWLYNYVDCDGLLFCTSYKFKGVLIWNPWLKQTRLFASNHHYPTKYVIGYDNKKRYKVLDYEFEPSSKLTIYEIGLYSKKVKDLESDSSWSVVQSNSVSLNGTLYWAGVDVNNGIFIRSFSFSTERLTTFCRLPLKYNEDNILALAVFRKDRFSLLKLCNKTSKIKIWLTKNSINNREIGLVEDVVWIKLMTVLIPDFPKLPFRWYNRPDLTYFLDNDDAKRLVICCYDETQQVYIYIVRRNIVKKIKIDLFEDLLDQSSPHLRTYIPSLVRPTQVKEDNNKLYVL.

The region spanning 1–46 (MVSVNLPWELVEEILYRVPPQSLARFRTVCKQWNSLFDDNKFVNDH) is the F-box domain.

This chain is Putative F-box only protein 10 (FBX10), found in Arabidopsis thaliana (Mouse-ear cress).